The primary structure comprises 317 residues: MIMRFGYVSHAMALWDCSPAKTMTFTSFQKLSKQEREDKLYDVTRQNLEHTIRILHYNIAHEIPLYRLSSSIVPLATHPEVEFDYIGLFTPLWRTIGALIKEHNLRVSFHPNQFTLFTSDKPHITTNAITDMTYHYKVLDAIGIADSSYINIHVGGAYGNKEKAVERFHDNIKKLPAHIKRRMTLENDDKTYTTAETLSICQKEKIPFVFDYHHHMANLCEEPLEELLPAIFETWSHTNIVPKVHISSPKSKKEFRAHAEYIDLEFIKPFLHVAKKINHNFDIMIESKQKDLAMLQFIHELSSIRGVKRISSSTLQW.

Belongs to the uve1/UvsE family.

In terms of biological role, component in a DNA repair pathway. Removal of UV LIGHT damaged nucleotides. Recognizes pyrimidine dimers and cleave a phosphodiester bond immediately 5' to the lesion. This is UV DNA damage endonuclease from Bacillus cereus (strain Q1).